The sequence spans 174 residues: Interleukin-10 (174 aa).

An N-terminal signal peptide occupies residues 1 to 16; it reads MPTWMLLFCLLCVTSS. The N-linked (GlcNAc...) asparagine glycan is linked to Asn-17. Disulfide bonds link Cys-26–Cys-122 and Cys-76–Cys-128.

It belongs to the IL-10 family. In terms of assembly, homodimer. Interacts with IL10RA and IL10RB.

It is found in the secreted. Functionally, major immune regulatory cytokine that acts on many cells of the immune system where it has profound anti-inflammatory functions, limiting excessive tissue disruption caused by inflammation. Mechanistically, IL10 binds to its heterotetrameric receptor comprising IL10RA and IL10RB leading to JAK1 and STAT2-mediated phosphorylation of STAT3. In turn, STAT3 translocates to the nucleus where it drives expression of anti-inflammatory mediators. Targets antigen-presenting cells (APCs) such as macrophages and monocytes and inhibits their release of pro-inflammatory cytokines including granulocyte-macrophage colony-stimulating factor /GM-CSF, granulocyte colony-stimulating factor/G-CSF, IL-1 alpha, IL-1 beta, IL-6, IL-8 and TNF-alpha. Also interferes with antigen presentation by reducing the expression of MHC-class II and co-stimulatory molecules, thereby inhibiting their ability to induce T cell activation. In addition, controls the inflammatory response of macrophages by reprogramming essential metabolic pathways including mTOR signaling. This chain is Interleukin-10 (IL10), found in Trichosurus vulpecula (Brush-tailed possum).